Here is a 230-residue protein sequence, read N- to C-terminus: Dephospho-CoA kinase (230 aa).

Residues 1–20 (MSKYAAIPSPYSHQPQAPDH) form a disordered region. Residues 26–225 (VVGLTGGIGS…QDYLKLAQQL (200 aa)) enclose the DPCK domain. 34–39 (GSGKSA) provides a ligand contact to ATP.

It belongs to the CoaE family.

Its subcellular location is the cytoplasm. The catalysed reaction is 3'-dephospho-CoA + ATP = ADP + CoA + H(+). It participates in cofactor biosynthesis; coenzyme A biosynthesis; CoA from (R)-pantothenate: step 5/5. In terms of biological role, catalyzes the phosphorylation of the 3'-hydroxyl group of dephosphocoenzyme A to form coenzyme A. This is Dephospho-CoA kinase from Psychrobacter arcticus (strain DSM 17307 / VKM B-2377 / 273-4).